The following is a 459-amino-acid chain: Transcriptional coactivator YAP1 (459 aa).

Phosphoserine; by LATS1 and LATS2 is present on residues Ser-21, Ser-69, Ser-87, and Ser-119. Disordered regions lie at residues 51–88 and 103–129; these read LPDS…AHSS and SGMA…VPLP. 2 WW domains span residues 126-159 and 186-219; these read VPLP…DPRK and GPLP…DPRL. Disordered stretches follow at residues 231–254 and 307–364; these read TQSA…MGGN and PTSM…SSYS. The interval 247-459 is transactivation domain; the sequence is HGGVMGGNNQ…IDKESFLTWL (213 aa). Polar residues-rich tracts occupy residues 307-347 and 355-364; these read PTSM…SGTY and DSGLSMSSYS.

It belongs to the YAP1 family. In terms of processing, phosphorylated by lats1 and lats2; leading to cytoplasmic translocation and inactivation. In terms of tissue distribution, ubiquitously expressed throughout development.

The protein resides in the cytoplasm. It is found in the nucleus. It localises to the cell junction. Its subcellular location is the tight junction. The protein localises to the cell membrane. Functionally, transcriptional regulator which can act both as a coactivator and a corepressor and is the critical downstream regulatory target in the Hippo signaling pathway that plays a pivotal role in organ size control and tumor suppression by restricting proliferation and promoting apoptosis. Plays a key role in tissue tension and 3D tissue shape by regulating cortical actomyosin network formation. The sequence is that of Transcriptional coactivator YAP1 from Oryzias latipes (Japanese rice fish).